Here is a 196-residue protein sequence, read N- to C-terminus: Protein GrpE (196 aa).

A disordered region spans residues 1–40 (MSSKEQKTPEGQAPEEIIMDQHEEVEAVEPNDSAEQVDPR).

Belongs to the GrpE family. As to quaternary structure, homodimer.

The protein localises to the cytoplasm. Its function is as follows. Participates actively in the response to hyperosmotic and heat shock by preventing the aggregation of stress-denatured proteins, in association with DnaK and GrpE. It is the nucleotide exchange factor for DnaK and may function as a thermosensor. Unfolded proteins bind initially to DnaJ; upon interaction with the DnaJ-bound protein, DnaK hydrolyzes its bound ATP, resulting in the formation of a stable complex. GrpE releases ADP from DnaK; ATP binding to DnaK triggers the release of the substrate protein, thus completing the reaction cycle. Several rounds of ATP-dependent interactions between DnaJ, DnaK and GrpE are required for fully efficient folding. This chain is Protein GrpE, found in Salmonella gallinarum (strain 287/91 / NCTC 13346).